The following is a 638-amino-acid chain: MPIITLPDGTKKEFSGSITIADIASDIGPGLASAAIAGKVNQDLVDISIPIDYDAEIKIITAKDKEGVEIIRHSFAHLIGHAVKQLYPDAKMAIGPIIEDGFYYDISYSKTFTPEDLARIEERIKDLIKLNYDVVVEIVSRDKALNTFKDRNEPYKVEIINNIPEGETIKLYKHQEYIDMCRGPHVPNTKHLNSFKLMRVSGAYWRGDSDNEMLQRIYGTAWANKKDLKAYINRLEEAEKRDHRKIGKKMDLFHTQEEAPGMVFWHPNGWSIYQVLEKYIRDVLNNNYYQEVKTPQAVDRSLWEKSGHWDKFKDDMFTTTSENREYAIKPMNCPCHIQIFNQGLKSYRDLPIRLAEFGSCHRNEPSGALHGLMRVRNFVQDDAHIFCTEAQVQSEVSNFIDLVFEVYKSFGFNEIIIKLSTRPKKRVGSEFIWDKSEKALSEALNSKGLDWSYLPGEGAFYGPKIEFSLKDCLNRVWQCGTIQVDFSMPSRLEAKYIDEKGEKKEPVMLHRAILGSFERFIGILIENYAGNFPVWLAPVQIIVMGITDRNSSCCESLTTKLINKGYRVKLDLRNEKIGFKIREHTLNRIPYLLIIGDKEEKEGKIAVRTREGNDMGSISLEEFLVILNKSISLKGRFD.

The TGS domain occupies 1–61 (MPIITLPDGT…DYDAEIKIIT (61 aa)). The tract at residues 242–533 (DHRKIGKKMD…LIENYAGNFP (292 aa)) is catalytic. Positions 333, 384, and 510 each coordinate Zn(2+).

The protein belongs to the class-II aminoacyl-tRNA synthetase family. As to quaternary structure, homodimer. It depends on Zn(2+) as a cofactor.

Its subcellular location is the cytoplasm. The enzyme catalyses tRNA(Thr) + L-threonine + ATP = L-threonyl-tRNA(Thr) + AMP + diphosphate + H(+). Catalyzes the attachment of threonine to tRNA(Thr) in a two-step reaction: L-threonine is first activated by ATP to form Thr-AMP and then transferred to the acceptor end of tRNA(Thr). Also edits incorrectly charged L-seryl-tRNA(Thr). The sequence is that of Threonine--tRNA ligase from Prochlorococcus marinus (strain MIT 9211).